Consider the following 381-residue polypeptide: tRNA pseudouridine synthase D (381 aa).

Asp81 serves as the catalytic Nucleophile. Residues 160–335 (GMPNYFGSQR…TLGSRRFFWV (176 aa)) enclose the TRUD domain.

Belongs to the pseudouridine synthase TruD family.

The enzyme catalyses uridine(13) in tRNA = pseudouridine(13) in tRNA. Functionally, responsible for synthesis of pseudouridine from uracil-13 in transfer RNAs. This is tRNA pseudouridine synthase D from Helicobacter pylori (strain ATCC 700392 / 26695) (Campylobacter pylori).